The chain runs to 521 residues: Probable feruloyl esterase B-2 (521 aa).

Residues 1 to 19 (MKVSLWLTLLGVNLSLALA) form the signal peptide. N-linked (GlcNAc...) asparagine glycans are attached at residues asparagine 13, asparagine 53, asparagine 85, asparagine 98, and asparagine 138. 2 cysteine pairs are disulfide-bonded: cysteine 28–cysteine 75 and cysteine 63–cysteine 114. 4 cysteine pairs are disulfide-bonded: cysteine 187–cysteine 440, cysteine 257–cysteine 274, cysteine 283–cysteine 291, and cysteine 506–cysteine 520. Catalysis depends on serine 188, which acts as the Acyl-ester intermediate. The N-linked (GlcNAc...) asparagine glycan is linked to asparagine 235. The Ca(2+) site is built by aspartate 258, aspartate 261, valine 263, aspartate 265, and isoleucine 267. Aspartate 399 serves as the catalytic Charge relay system. N-linked (GlcNAc...) asparagine glycosylation is present at asparagine 419. Histidine 439 (charge relay system) is an active-site residue.

It belongs to the tannase family.

It is found in the secreted. The enzyme catalyses feruloyl-polysaccharide + H2O = ferulate + polysaccharide.. In terms of biological role, involved in degradation of plant cell walls. Hydrolyzes the feruloyl-arabinose ester bond in arabinoxylans as well as the feruloyl-galactose and feruloyl-arabinose ester bonds in pectin. The chain is Probable feruloyl esterase B-2 (faeB-2) from Aspergillus flavus (strain ATCC 200026 / FGSC A1120 / IAM 13836 / NRRL 3357 / JCM 12722 / SRRC 167).